The primary structure comprises 508 residues: Putative POTE ankyrin domain family member M (508 aa).

ANK repeat units lie at residues 172–201 (QKRT…QLNI), 205–234 (KKRT…DPNI), 238–267 (YGNT…DIES), 271–300 (HGLT…NLNA), and 304–333 (YGRT…DVSS). Positions 369-487 (SSENSNPEQD…KQLSEEQNTG (119 aa)) are disordered. Composition is skewed to basic and acidic residues over residues 377–392 (QDLK…RLKG) and 406–421 (EINK…EMKK). Positions 476 to 487 (TQKQLSEEQNTG) are enriched in polar residues.

It belongs to the POTE family.

In Homo sapiens (Human), this protein is Putative POTE ankyrin domain family member M (POTEM).